The primary structure comprises 169 residues: Phosphopantetheine adenylyltransferase (169 aa).

Thr-13 is a binding site for substrate. ATP contacts are provided by residues 13–14 and His-21; that span reads TF. 3 residues coordinate substrate: Lys-45, Leu-82, and Arg-96. ATP-binding positions include 97–99, Glu-107, and 132–138; these read GLR and HQFISSR.

This sequence belongs to the bacterial CoaD family. In terms of assembly, homohexamer. Requires Mg(2+) as cofactor.

The protein resides in the cytoplasm. It carries out the reaction (R)-4'-phosphopantetheine + ATP + H(+) = 3'-dephospho-CoA + diphosphate. It functions in the pathway cofactor biosynthesis; coenzyme A biosynthesis; CoA from (R)-pantothenate: step 4/5. In terms of biological role, reversibly transfers an adenylyl group from ATP to 4'-phosphopantetheine, yielding dephospho-CoA (dPCoA) and pyrophosphate. This is Phosphopantetheine adenylyltransferase from Acidiphilium cryptum (strain JF-5).